A 286-amino-acid polypeptide reads, in one-letter code: 2-hydroxy-6-oxo-6-phenylhexa-2,4-dienoate hydrolase (286 aa).

Substrate is bound by residues 42-43, Asn-51, Lys-111, Ser-180, and Arg-190; that span reads GG. In terms of domain architecture, AB hydrolase-1 spans 173–271; it reads NVFLFDQSLI…RCVHWAQWEH (99 aa). The Proton acceptor role is filled by His-265. Position 266 (Trp-266) interacts with substrate.

It belongs to the AB hydrolase superfamily. BphD family. Homodimer.

It catalyses the reaction 2,6-dioxo-6-phenylhexa-3-enoate + H2O = 2-oxopent-4-enoate + benzoate + H(+). It participates in xenobiotic degradation; biphenyl degradation; 2-hydroxy-2,4-pentadienoate and benzoate from biphenyl: step 4/4. Functionally, catalyzes an unusual C-C bond hydrolysis of 2-hydroxy-6-oxo-6-phenylhexa-2,4-dienoic acid (HOPDA) to produce benzoic acid and 2-hydroxy-2,4-pentadienoic acid (HPD). The chain is 2-hydroxy-6-oxo-6-phenylhexa-2,4-dienoate hydrolase from Delftia acidovorans (Pseudomonas acidovorans).